Here is a 121-residue protein sequence, read N- to C-terminus: Large ribosomal subunit protein uL18 (121 aa).

Belongs to the universal ribosomal protein uL18 family. As to quaternary structure, part of the 50S ribosomal subunit; part of the 5S rRNA/L5/L18/L25 subcomplex. Contacts the 5S and 23S rRNAs.

This is one of the proteins that bind and probably mediate the attachment of the 5S RNA into the large ribosomal subunit, where it forms part of the central protuberance. The protein is Large ribosomal subunit protein uL18 of Leptothrix cholodnii (strain ATCC 51168 / LMG 8142 / SP-6) (Leptothrix discophora (strain SP-6)).